Consider the following 412-residue polypeptide: Sterol-4-alpha-carboxylate 3-dehydrogenase erg26, decarboxylating (412 aa).

NADP(+) contacts are provided by residues 17–23 (GGCGFLG), 89–90 (DI), and 111–113 (TAT). Positions 158 and 188 each coordinate substrate. NADP(+) contacts are provided by residues tyrosine 188, lysine 192, and 217 to 220 (PAGI). Lysine 192 (proton donor) is an active-site residue.

This sequence belongs to the 3-beta-HSD family. In terms of assembly, heterotetramer of erg25, erg26, erg27 and erg28. Erg28 acts as a scaffold to tether erg27 and other 4,4-demethylation-related enzymes, forming a demethylation enzyme complex, in the endoplasmic reticulum.

The protein resides in the endoplasmic reticulum membrane. The protein operates within steroid metabolism; ergosterol biosynthesis. Sterol-C4-methyl oxidase; part of the third module of ergosterol biosynthesis pathway that includes the late steps of the pathway. Erg26 is a catalytic component of the C-4 demethylation complex that catalyzes the conversion of 4,4-dimethylfecosterol into fecosterol via 4-methylfecosterol. The third module or late pathway involves the ergosterol synthesis itself through consecutive reactions that mainly occur in the endoplasmic reticulum (ER) membrane. Firstly, the squalene synthase erg9 catalyzes the condensation of 2 farnesyl pyrophosphate moieties to form squalene, which is the precursor of all steroids. Squalene synthase is crucial for balancing the incorporation of farnesyl diphosphate (FPP) into sterol and nonsterol isoprene synthesis. Secondly, squalene is converted into lanosterol by the consecutive action of the squalene epoxidase erg1 and the lanosterol synthase erg7. Then, the delta(24)-sterol C-methyltransferase erg6 methylates lanosterol at C-24 to produce eburicol. Eburicol is the substrate of the sterol 14-alpha demethylase encoded by cyp51A and cyp51B, to yield 4,4,24-trimethyl ergosta-8,14,24(28)-trienol. The C-14 reductase erg24 then reduces the C14=C15 double bond which leads to 4,4-dimethylfecosterol. A sequence of further demethylations at C-4, involving the C-4 demethylation complex containing the C-4 methylsterol oxidases erg25A or erg25B, the sterol-4-alpha-carboxylate 3-dehydrogenase erg26 and the 3-keto-steroid reductase erg27, leads to the production of fecosterol via 4-methylfecosterol. The C-8 sterol isomerase erg2 then catalyzes the reaction which results in unsaturation at C-7 in the B ring of sterols and thus converts fecosterol to episterol. The sterol-C5-desaturase erg3B then catalyzes the introduction of a C-5 double bond in the B ring to produce 5-dehydroepisterol. The 2 other sterol-C5-desaturases, erg3A and erg3C, seem to be less important in ergosterol biosynthesis. The C-22 sterol desaturase erg5 further converts 5-dehydroepisterol into ergosta-5,7,22,24(28)-tetraen-3beta-ol by forming the C-22(23) double bond in the sterol side chain. Finally, ergosta-5,7,22,24(28)-tetraen-3beta-ol is substrate of the C-24(28) sterol reductases erg4A and erg4B to produce ergosterol. Possible alternative sterol biosynthetic pathways might exist from fecosterol to ergosterol, depending on the activities of the erg3 isoforms. In Aspergillus fumigatus (strain ATCC MYA-4609 / CBS 101355 / FGSC A1100 / Af293) (Neosartorya fumigata), this protein is Sterol-4-alpha-carboxylate 3-dehydrogenase erg26, decarboxylating.